The primary structure comprises 284 residues: Tropomyosin (284 aa).

Residues 1–284 adopt a coiled-coil conformation; the sequence is MDAIKKKMQA…DQTFAEIAGY (284 aa). The interval 103-133 is disordered; sequence EEKLATTTEKLEEASKAADESERNRKVLEGR.

This sequence belongs to the tropomyosin family. As to quaternary structure, homodimer.

Its function is as follows. Tropomyosin, in association with the troponin complex, plays a central role in the calcium dependent regulation of muscle contraction. The sequence is that of Tropomyosin from Chlamys nipponensis akazara (Akazara scallop).